An 89-amino-acid chain; its full sequence is Progonadoliberin-1 (89 aa).

The N-terminal stretch at 1–23 (MKAFPTFALLFLVLLFSAHVSDA) is a signal peptide. A Pyrrolidone carboxylic acid modification is found at Gln24. The residue at position 33 (Gly33) is a Glycine amide.

This sequence belongs to the GnRH family. Expressed in the forebrain from larval stages.

The protein localises to the secreted. In terms of biological role, stimulates the secretion of gonadotropins. In Xenopus laevis (African clawed frog), this protein is Progonadoliberin-1 (gnrh1).